We begin with the raw amino-acid sequence, 326 residues long: Beta-ketoacyl-[acyl-carrier-protein] synthase III (326 aa).

Residues Cys-113 and His-253 contribute to the active site. The tract at residues 254 to 258 (QANIR) is ACP-binding. Residue Asn-283 is part of the active site.

This sequence belongs to the thiolase-like superfamily. FabH family. Homodimer.

It is found in the cytoplasm. It catalyses the reaction malonyl-[ACP] + acetyl-CoA + H(+) = 3-oxobutanoyl-[ACP] + CO2 + CoA. Its pathway is lipid metabolism; fatty acid biosynthesis. Catalyzes the condensation reaction of fatty acid synthesis by the addition to an acyl acceptor of two carbons from malonyl-ACP. Catalyzes the first condensation reaction which initiates fatty acid synthesis and may therefore play a role in governing the total rate of fatty acid production. Possesses both acetoacetyl-ACP synthase and acetyl transacylase activities. Its substrate specificity determines the biosynthesis of branched-chain and/or straight-chain of fatty acids. The polypeptide is Beta-ketoacyl-[acyl-carrier-protein] synthase III (Wolbachia sp. subsp. Brugia malayi (strain TRS)).